A 711-amino-acid polypeptide reads, in one-letter code: Polyribonucleotide nucleotidyltransferase (711 aa).

Residues D490 and D496 each coordinate Mg(2+). A KH domain is found at P557–I619. Residues G629–K699 enclose the S1 motif domain.

It belongs to the polyribonucleotide nucleotidyltransferase family. Mg(2+) is required as a cofactor.

Its subcellular location is the cytoplasm. It carries out the reaction RNA(n+1) + phosphate = RNA(n) + a ribonucleoside 5'-diphosphate. Its function is as follows. Involved in mRNA degradation. Catalyzes the phosphorolysis of single-stranded polyribonucleotides processively in the 3'- to 5'-direction. The protein is Polyribonucleotide nucleotidyltransferase of Phocaeicola vulgatus (strain ATCC 8482 / DSM 1447 / JCM 5826 / CCUG 4940 / NBRC 14291 / NCTC 11154) (Bacteroides vulgatus).